The following is a 256-amino-acid chain: tRNA (guanine-N(7)-)-methyltransferase (256 aa).

The disordered stretch occupies residues 1 to 25; it reads MVATGGQAQDQSQNQEPDVLNPTSA. S-adenosyl-L-methionine-binding positions include Gly-79, 102–103, 137–138, and Leu-157; these read EI and NA. The active site involves Asp-160. 235–237 contacts S-adenosyl-L-methionine; it reads SEE.

It belongs to the class I-like SAM-binding methyltransferase superfamily. TrmB family.

The protein localises to the nucleus. It catalyses the reaction guanosine(46) in tRNA + S-adenosyl-L-methionine = N(7)-methylguanosine(46) in tRNA + S-adenosyl-L-homocysteine. It participates in tRNA modification; N(7)-methylguanine-tRNA biosynthesis. Its function is as follows. Catalyzes the formation of N(7)-methylguanine at position 46 (m7G46) in tRNA. The chain is tRNA (guanine-N(7)-)-methyltransferase from Drosophila simulans (Fruit fly).